A 131-amino-acid polypeptide reads, in one-letter code: MTAEIMEKAEVLAAAIAKSVELQNLRSTEEAMMADEQAQQIIADFQNEQQRVYELQAQGQELTDEVQQAIDAMEAKVEGYPPIAAYLQAQEQFTKMLDTINGVLAQAIANDPNGGGCSCDTGCSGCGGSCS.

It belongs to the UPF0342 family.

The protein is UPF0342 protein DSY1594 of Desulfitobacterium hafniense (strain Y51).